The primary structure comprises 1055 residues: SMC5-SMC6 complex localization factor protein 1 (1055 aa).

BRCT domains lie at 2–80 and 121–199; these read EDDA…AQSG and PGAF…LLEK. The interval 312-332 is disordered; it reads KKRKKEKERDSRKDIEHDRST. Over residues 318-332 the composition is skewed to basic and acidic residues; it reads KERDSRKDIEHDRST. The interval 407-1055 is NSE5-like domain; mediates interaction with SLF2; sequence PRGILNLIES…VMCRSVTEIS (649 aa). ANK repeat units follow at residues 804-834, 838-867, and 872-901; these read KGET…DINV, AGWT…EVDL, and DGVT…PVLL. Lys929 is covalently cross-linked (Glycyl lysine isopeptide (Lys-Gly) (interchain with G-Cter in SUMO2)).

In terms of assembly, interacts (via N-terminus) with SLF2; this interaction links RAD18 to the SMC5-SMC6 complex. Interacts (via BRCT domains) with RAD18; this interaction occurs in a SLF2-independent manner. Interacts with SMC6. Interacts (via BRCT domains) with RAD18 (via C-terminus and phosphorylated form); this interaction is required for efficient repair of UV-induced DNA damage.

Its subcellular location is the nucleus. The protein localises to the cytoplasm. It localises to the cytoskeleton. It is found in the microtubule organizing center. The protein resides in the centrosome. Functionally, plays a role in the DNA damage response (DDR) pathway by regulating postreplication repair of UV-damaged DNA and genomic stability maintenance. The SLF1-SLF2 complex acts to link RAD18 with the SMC5-SMC6 complex at replication-coupled interstrand cross-links (ICL) and DNA double-strand breaks (DSBs) sites on chromatin during DNA repair in response to stalled replication forks. Promotes the recruitment of SLF2 and the SMC5-SMC6 complex to DNA lesions. In Bos taurus (Bovine), this protein is SMC5-SMC6 complex localization factor protein 1.